The following is a 631-amino-acid chain: Dolichyl-diphosphooligosaccharide--protein glycosyltransferase subunit 2 (631 aa).

Positions 1–22 are cleaved as a signal peptide; the sequence is MAPPGSSTVFLLALTIIASTWA. Residues 23-540 lie on the Lumenal side of the membrane; it reads LTPTHYLTKH…REPEKRPPTV (518 aa). Residue Asn-106 is glycosylated (N-linked (GlcNAc...) asparagine). Lys-154 participates in a covalent cross-link: Glycyl lysine isopeptide (Lys-Gly) (interchain with G-Cter in ubiquitin). A helical membrane pass occupies residues 541 to 561; sequence VSNTFTALILSPLLLLFALWI. Residues 562–571 are Cytoplasmic-facing; that stretch reads RIGANVSNFT. The chain crosses the membrane as a helical span at residues 572–592; it reads FAPSTIIFHLGHAAMLGLMYV. The Lumenal segment spans residues 593–596; the sequence is YWTQ. A helical membrane pass occupies residues 597-617; sequence LNMFQTLKYLAILGSVTFLAG. Topologically, residues 618–631 are cytoplasmic; sequence NRMLAQQAVKRTAH.

This sequence belongs to the SWP1 family. As to quaternary structure, component of the oligosaccharyltransferase (OST) complex. OST exists in two different complex forms which contain common core subunits RPN1, RPN2, OST48, OST4, DAD1 and TMEM258, either STT3A or STT3B as catalytic subunits, and form-specific accessory subunits. STT3A complex assembly occurs through the formation of 3 subcomplexes. Subcomplex 1 contains RPN1 and TMEM258, subcomplex 2 contains the STT3A-specific subunits STT3A, DC2/OSTC, and KCP2 as well as the core subunit OST4, and subcomplex 3 contains RPN2, DAD1, and OST48. The STT3A complex can form stable complexes with the Sec61 complex or with both the Sec61 and TRAP complexes. Interacts with DDI2. Interacts with TMEM35A/NACHO. As to expression, expressed in all tissues tested.

The protein resides in the endoplasmic reticulum. It localises to the endoplasmic reticulum membrane. It functions in the pathway protein modification; protein glycosylation. In terms of biological role, subunit of the oligosaccharyl transferase (OST) complex that catalyzes the initial transfer of a defined glycan (Glc(3)Man(9)GlcNAc(2) in eukaryotes) from the lipid carrier dolichol-pyrophosphate to an asparagine residue within an Asn-X-Ser/Thr consensus motif in nascent polypeptide chains, the first step in protein N-glycosylation. N-glycosylation occurs cotranslationally and the complex associates with the Sec61 complex at the channel-forming translocon complex that mediates protein translocation across the endoplasmic reticulum (ER). All subunits are required for a maximal enzyme activity. The chain is Dolichyl-diphosphooligosaccharide--protein glycosyltransferase subunit 2 from Homo sapiens (Human).